Consider the following 152-residue polypeptide: Deoxyuridine 5'-triphosphate nucleotidohydrolase (152 aa).

Substrate-binding positions include 71–73 (RSG), N84, 88–90 (LID), and K98.

Belongs to the dUTPase family. Mg(2+) serves as cofactor.

The catalysed reaction is dUTP + H2O = dUMP + diphosphate + H(+). It participates in pyrimidine metabolism; dUMP biosynthesis; dUMP from dCTP (dUTP route): step 2/2. In terms of biological role, this enzyme is involved in nucleotide metabolism: it produces dUMP, the immediate precursor of thymidine nucleotides and it decreases the intracellular concentration of dUTP so that uracil cannot be incorporated into DNA. The polypeptide is Deoxyuridine 5'-triphosphate nucleotidohydrolase (Legionella pneumophila (strain Paris)).